Here is a 321-residue protein sequence, read N- to C-terminus: Transaldolase (321 aa).

Lysine 132 functions as the Schiff-base intermediate with substrate in the catalytic mechanism.

This sequence belongs to the transaldolase family. Type 1 subfamily. In terms of assembly, homodimer.

The protein resides in the cytoplasm. It carries out the reaction D-sedoheptulose 7-phosphate + D-glyceraldehyde 3-phosphate = D-erythrose 4-phosphate + beta-D-fructose 6-phosphate. It functions in the pathway carbohydrate degradation; pentose phosphate pathway; D-glyceraldehyde 3-phosphate and beta-D-fructose 6-phosphate from D-ribose 5-phosphate and D-xylulose 5-phosphate (non-oxidative stage): step 2/3. Its function is as follows. Transaldolase is important for the balance of metabolites in the pentose-phosphate pathway. This chain is Transaldolase, found in Rhizobium leguminosarum bv. trifolii (strain WSM2304).